A 513-amino-acid chain; its full sequence is MTAQMHEAGRTKEAGNRLQAWRTGIDTYQEPVVYMRRDCPVCRSEGFTTQARVQLTAGGRSIVATLSVVDGDWLAENVAGLSESAWASLGAQPGEPVAVTHAPPLDSLSHVRAKVYGNSLGDAQFGAIISDVAAGRYSDLHLATFITACAGDRLDLAETLSLTKAMIAVGDRIDWGRPLVVDKHCVGGLPGNRTTLLVVPIVTACGLMMPKTSSRAITSPAGTADTMEVLAPVNLDVPSMRRVVERTGGCIVWGGSVRLSPADDILIRVERPLDLDSEGQLVASVLSKKAAAGSTHVLIDLPVGATAKVRSAHAAASLGRRLQEVGGAIGLQVFLRVTDGEQPVGRGIGPALEARDVLAVLQGTREAPADLRERALRLAADILEMGGAAPAGGGLKLATEVLADGRAWAKFQAICSEQGGLRSLPMAAHLHTVESPGTGRVTRIDNRLLARAAKLAGAPTAPAAGIDVHARLGDRVEAGQPLFTLHAQAPGELAYALEFVRARPPIFQISENV.

This sequence belongs to the thymidine/pyrimidine-nucleoside phosphorylase family. Type 2 subfamily.

It carries out the reaction thymidine + phosphate = 2-deoxy-alpha-D-ribose 1-phosphate + thymine. The chain is Putative thymidine phosphorylase 2 from Acidovorax sp. (strain JS42).